The sequence spans 324 residues: N-acetyl-gamma-glutamyl-phosphate reductase (324 aa).

Cys131 is a catalytic residue.

Belongs to the NAGSA dehydrogenase family. Type 1 subfamily.

It localises to the cytoplasm. It carries out the reaction N-acetyl-L-glutamate 5-semialdehyde + phosphate + NADP(+) = N-acetyl-L-glutamyl 5-phosphate + NADPH + H(+). It participates in amino-acid biosynthesis; L-arginine biosynthesis; N(2)-acetyl-L-ornithine from L-glutamate: step 3/4. Functionally, catalyzes the NADPH-dependent reduction of N-acetyl-5-glutamyl phosphate to yield N-acetyl-L-glutamate 5-semialdehyde. The polypeptide is N-acetyl-gamma-glutamyl-phosphate reductase (Bradyrhizobium sp. (strain ORS 278)).